The following is a 267-amino-acid chain: Small ribosomal subunit protein uS3 (267 aa).

In terms of domain architecture, KH type-2 spans 43–111 (IRKEMSKDLE…QVQLNIFEVK (69 aa)). The tract at residues 216–267 (FEEQQAQQNNRPGRRGGDRRPRRGNRSAAPQAAEAPKAEAPAEAAPAAETKE) is disordered. The segment covering 241–267 (RSAAPQAAEAPKAEAPAEAAPAAETKE) has biased composition (low complexity).

This sequence belongs to the universal ribosomal protein uS3 family. In terms of assembly, part of the 30S ribosomal subunit. Forms a tight complex with proteins S10 and S14.

In terms of biological role, binds the lower part of the 30S subunit head. Binds mRNA in the 70S ribosome, positioning it for translation. The polypeptide is Small ribosomal subunit protein uS3 (Bifidobacterium longum (strain DJO10A)).